An 86-amino-acid chain; its full sequence is Molybdopterin synthase sulfur carrier subunit (86 aa).

The residue at position 86 (Gly86) is a 1-thioglycine; alternate. Gly86 bears the Glycyl adenylate; alternate mark.

This sequence belongs to the MoaD family. MOCS2A subfamily. Heterotetramer; composed of 2 small (mocs2s) and 2 large (mocs2l) subunits. In terms of processing, C-terminal thiocarboxylation occurs in 2 steps, it is first acyl-adenylated (-COAMP) via the hesA/moeB/thiF part of mocs3, then thiocarboxylated (-COSH) via the rhodanese domain of mocs3.

Its subcellular location is the cytoplasm. The protein operates within cofactor biosynthesis; molybdopterin biosynthesis. Its function is as follows. Acts as a sulfur carrier required for molybdopterin biosynthesis. Component of the molybdopterin synthase complex that catalyzes the conversion of precursor Z into molybdopterin by mediating the incorporation of 2 sulfur atoms into precursor Z to generate a dithiolene group. In the complex, serves as sulfur donor by being thiocarboxylated (-COSH) at its C-terminus by mocs3. After interaction with mocs2l, the sulfur is then transferred to precursor Z to form molybdopterin. The sequence is that of Molybdopterin synthase sulfur carrier subunit (mocs2s) from Dictyostelium discoideum (Social amoeba).